A 517-amino-acid chain; its full sequence is T-complex protein 11-like protein 2 (517 aa).

Residues 1–59 (MPFNGEKQYVNEDQQSDSESSRFSESTASLSDYGCSRQSFTSDSSSKSSSPASTSPPRG) form a disordered region. The residue at position 16 (Ser16) is a Phosphoserine. The span at 17–55 (DSESSRFSESTASLSDYGCSRQSFTSDSSSKSSSPASTS) shows a compositional bias: low complexity.

It belongs to the TCP11 family. As to quaternary structure, interacts with FMNL2; this interaction promotes muscle-derived satellite cell (MDSC) migration and differentiation.

The protein localises to the cytoplasm. Its subcellular location is the cytoskeleton. Promotes the migration of muscle-derived satellite cells (MDSCs) during differentiation throught interaction with FMNL2 and therefore may participate in microfilament assembly. This Rattus norvegicus (Rat) protein is T-complex protein 11-like protein 2.